Reading from the N-terminus, the 530-residue chain is Glucose-6-phosphate isomerase (530 aa).

The Proton donor role is filled by glutamate 322. Residues histidine 351 and lysine 455 contribute to the active site.

The protein belongs to the GPI family.

The protein resides in the cytoplasm. The catalysed reaction is alpha-D-glucose 6-phosphate = beta-D-fructose 6-phosphate. Its pathway is carbohydrate biosynthesis; gluconeogenesis. It participates in carbohydrate degradation; glycolysis; D-glyceraldehyde 3-phosphate and glycerone phosphate from D-glucose: step 2/4. Catalyzes the reversible isomerization of glucose-6-phosphate to fructose-6-phosphate. This chain is Glucose-6-phosphate isomerase, found in Citrifermentans bemidjiense (strain ATCC BAA-1014 / DSM 16622 / JCM 12645 / Bem) (Geobacter bemidjiensis).